Reading from the N-terminus, the 512-residue chain is Glycerol kinase 1 (512 aa).

Position 18 (Thr-18) interacts with ADP. ATP is bound by residues Thr-18, Thr-19, and Ser-20. Thr-18 provides a ligand contact to sn-glycerol 3-phosphate. Position 22 (Arg-22) interacts with ADP. The sn-glycerol 3-phosphate site is built by Arg-88, Glu-89, Tyr-140, and Asp-255. Positions 88, 89, 140, 255, and 256 each coordinate glycerol. 2 residues coordinate ADP: Thr-277 and Gly-321. The ATP site is built by Thr-277, Gly-321, Gln-325, and Gly-422. Residues Gly-422 and Asn-426 each contribute to the ADP site.

Belongs to the FGGY kinase family.

The catalysed reaction is glycerol + ATP = sn-glycerol 3-phosphate + ADP + H(+). The protein operates within polyol metabolism; glycerol degradation via glycerol kinase pathway; sn-glycerol 3-phosphate from glycerol: step 1/1. Inhibited by fructose 1,6-bisphosphate (FBP). Its function is as follows. Key enzyme in the regulation of glycerol uptake and metabolism. Catalyzes the phosphorylation of glycerol to yield sn-glycerol 3-phosphate. The chain is Glycerol kinase 1 from Streptomyces avermitilis (strain ATCC 31267 / DSM 46492 / JCM 5070 / NBRC 14893 / NCIMB 12804 / NRRL 8165 / MA-4680).